A 512-amino-acid chain; its full sequence is ATP synthase subunit alpha (512 aa).

Position 169-176 (169-176 (GDRQTGKT)) interacts with ATP.

This sequence belongs to the ATPase alpha/beta chains family. F-type ATPases have 2 components, CF(1) - the catalytic core - and CF(0) - the membrane proton channel. CF(1) has five subunits: alpha(3), beta(3), gamma(1), delta(1), epsilon(1). CF(0) has three main subunits: a(1), b(2) and c(9-12). The alpha and beta chains form an alternating ring which encloses part of the gamma chain. CF(1) is attached to CF(0) by a central stalk formed by the gamma and epsilon chains, while a peripheral stalk is formed by the delta and b chains.

It localises to the cell inner membrane. The catalysed reaction is ATP + H2O + 4 H(+)(in) = ADP + phosphate + 5 H(+)(out). In terms of biological role, produces ATP from ADP in the presence of a proton gradient across the membrane. The alpha chain is a regulatory subunit. The sequence is that of ATP synthase subunit alpha from Aromatoleum aromaticum (strain DSM 19018 / LMG 30748 / EbN1) (Azoarcus sp. (strain EbN1)).